The chain runs to 466 residues: Ribulose bisphosphate carboxylase large chain (466 aa).

An N6,N6,N6-trimethyllysine modification is found at Lys5. Residues Asn114 and Thr164 each contribute to the substrate site. Lys166 (proton acceptor) is an active-site residue. Lys168 is a binding site for substrate. 3 residues coordinate Mg(2+): Lys192, Asp194, and Glu195. At Lys192 the chain carries N6-carboxylysine. Residue His285 is the Proton acceptor of the active site. Positions 286, 318, and 370 each coordinate substrate.

This sequence belongs to the RuBisCO large chain family. Type I subfamily. Heterohexadecamer of 8 large chains and 8 small chains; disulfide-linked. The disulfide link is formed within the large subunit homodimers. It depends on Mg(2+) as a cofactor. Post-translationally, the disulfide bond which can form in the large chain dimeric partners within the hexadecamer appears to be associated with oxidative stress and protein turnover.

The protein resides in the plastid. Its subcellular location is the chloroplast. It catalyses the reaction 2 (2R)-3-phosphoglycerate + 2 H(+) = D-ribulose 1,5-bisphosphate + CO2 + H2O. The enzyme catalyses D-ribulose 1,5-bisphosphate + O2 = 2-phosphoglycolate + (2R)-3-phosphoglycerate + 2 H(+). In terms of biological role, ruBisCO catalyzes two reactions: the carboxylation of D-ribulose 1,5-bisphosphate, the primary event in carbon dioxide fixation, as well as the oxidative fragmentation of the pentose substrate in the photorespiration process. Both reactions occur simultaneously and in competition at the same active site. This Cucurbita pepo (Vegetable marrow) protein is Ribulose bisphosphate carboxylase large chain.